The primary structure comprises 448 residues: Iroquois-class homeodomain protein irx-3 (448 aa).

A DNA-binding region (homeobox; TALE-type) is located at residues 108-170 (DPSRPKNATR…NARRRLKKEN (63 aa)). Positions 171–247 (KMTWAPRSRT…EVSDGFEDLN (77 aa)) are disordered. Residues 195–222 (KHEDEEEIDLENIDTEDIESKEDLDDPD) show a composition bias toward acidic residues. Positions 223–237 (TDIHSDSKTDTRSDS) are enriched in basic and acidic residues. Residues 238–247 (EVSDGFEDLN) show a composition bias toward acidic residues.

It belongs to the TALE/IRO homeobox family. Primarily expressed in the developing central nervous system (CNS). At gastrula stage, expressed in both the superficial and deep layers of the presumptive neural plate with expression spreading to the prospective hindbrain, spinal cord and midbrain-hindbrain junction as neurulation proceeds. Not expressed in the anterior neural plate and CNS expression in the tadpole excludes the forebrain. Outside of the CNS, expressed around the closing blastopore at early gastrula stages and as gastrulation proceeds, expression switches to the anterior lateral plate mesoderm. In tadpoles, expressed in the ectodermal layer of the branchial arches, and in the otic vesicle. Also expressed in specific and overlapping dynamic patterns with irx1 and irx2 during pronephric kidney development. Renal expression begins before segment-specific terminal differentiation in the pronephric anlage at mid-neurula stage, and is later found in proximal tubule PT3 as well as intermediate tubule segments IT1 and IT2, with expression in the kidney being maintained through to the tadpole stage.

The protein resides in the nucleus. Its function is as follows. Acts partially redundantly with other irx members in neural patterning. Required for formation of the posterior forebrain, midbrain, hindbrain, and to a lesser extent, spinal cord. Both up-regulates and down-regulates gene expression during neural development. Acts early in neural plate development to induce proneural gene expression and specify a neural precursor state. Also up-regulates repressors that prevent neuronal differentiation. Required during at least two stages of pronephros kidney development; during neurula stages, maintains transcription of key renal genes to define the size and identity of the pronephric anlage, probably in part through regulation of bmp-signaling. Subsequently required for proper formation of the intermediate tubule segment of the pronephros. This is Iroquois-class homeodomain protein irx-3 (irx3) from Xenopus laevis (African clawed frog).